Consider the following 436-residue polypeptide: Xylose isomerase (436 aa).

The Mg(2+) site is built by D306 and D308.

The protein belongs to the xylose isomerase family. As to quaternary structure, homotetramer. Mg(2+) is required as a cofactor.

Its subcellular location is the cytoplasm. The catalysed reaction is alpha-D-xylose = alpha-D-xylulofuranose. This chain is Xylose isomerase, found in Rhizobium rhizogenes (strain K84 / ATCC BAA-868) (Agrobacterium radiobacter).